Here is a 203-residue protein sequence, read N- to C-terminus: Peptide deformylase (203 aa).

Fe cation-binding residues include cysteine 130 and histidine 173. Residue glutamate 174 is part of the active site. Histidine 177 is a binding site for Fe cation.

It belongs to the polypeptide deformylase family. Requires Fe(2+) as cofactor.

The catalysed reaction is N-terminal N-formyl-L-methionyl-[peptide] + H2O = N-terminal L-methionyl-[peptide] + formate. Its function is as follows. Removes the formyl group from the N-terminal Met of newly synthesized proteins. Requires at least a dipeptide for an efficient rate of reaction. N-terminal L-methionine is a prerequisite for activity but the enzyme has broad specificity at other positions. This is Peptide deformylase from Streptococcus pneumoniae serotype 19F (strain G54).